A 287-amino-acid polypeptide reads, in one-letter code: 4-hydroxybenzoate octaprenyltransferase (287 aa).

6 helical membrane-spanning segments follow: residues Trp-41–Met-61, Trp-89–Leu-109, Phe-133–Phe-153, Asp-158–Tyr-178, Phe-202–Ile-224, and Asn-267–Ser-287.

This sequence belongs to the UbiA prenyltransferase family. Mg(2+) serves as cofactor.

It localises to the cell inner membrane. The enzyme catalyses all-trans-octaprenyl diphosphate + 4-hydroxybenzoate = 4-hydroxy-3-(all-trans-octaprenyl)benzoate + diphosphate. The protein operates within cofactor biosynthesis; ubiquinone biosynthesis. Functionally, catalyzes the prenylation of para-hydroxybenzoate (PHB) with an all-trans polyprenyl group. Mediates the second step in the final reaction sequence of ubiquinone-8 (UQ-8) biosynthesis, which is the condensation of the polyisoprenoid side chain with PHB, generating the first membrane-bound Q intermediate 3-octaprenyl-4-hydroxybenzoate. The chain is 4-hydroxybenzoate octaprenyltransferase from Burkholderia lata (strain ATCC 17760 / DSM 23089 / LMG 22485 / NCIMB 9086 / R18194 / 383).